Consider the following 203-residue polypeptide: Elongation factor Ts (203 aa).

Residues 80–83 (TDFV) are involved in Mg(2+) ion dislocation from EF-Tu.

The protein belongs to the EF-Ts family.

Its subcellular location is the cytoplasm. Functionally, associates with the EF-Tu.GDP complex and induces the exchange of GDP to GTP. It remains bound to the aminoacyl-tRNA.EF-Tu.GTP complex up to the GTP hydrolysis stage on the ribosome. The chain is Elongation factor Ts from Moorella thermoacetica (strain ATCC 39073 / JCM 9320).